Reading from the N-terminus, the 853-residue chain is A-kinase anchor protein 3 (853 aa).

Residues 124-137 form a PKA-RII subunit binding domain region; that stretch reads VSFYANRLTNLVIA. The tract at residues 188–240 is disordered; the sequence is RNAAPDKAPGSGDRVSGSSQSPPNLKYKSTLKIKESTKERQGPDDKPPSKKSF. Residues S205 and S208 each carry the phosphoserine modification. Over residues 219–235 the composition is skewed to basic and acidic residues; sequence KIKESTKERQGPDDKPP. Position 403 is a phosphoserine (S403). Y404 carries the phosphotyrosine modification. A phosphoserine mark is found at S635 and S636.

This sequence belongs to the AKAP110 family. In terms of assembly, interacts with ROPN1 and ROPN1L. Interacts with QRICH2. Post-translationally, phosphorylated by STK33 during sperm flagella assembly. Phosphorylated on tyrosine residues. As to expression, testis specific; only expressed in spermatids.

Its subcellular location is the cytoplasmic vesicle. It is found in the secretory vesicle. It localises to the acrosome. The protein localises to the cell projection. The protein resides in the cilium. Its subcellular location is the flagellum. Structural component of sperm fibrous sheath. Required for the formation of the subcellular structure of the sperm flagellum, sperm motility and male fertility. The polypeptide is A-kinase anchor protein 3 (Homo sapiens (Human)).